The following is a 326-amino-acid chain: Hairy/enhancer-of-split related with YRPW motif-like protein (326 aa).

A disordered region spans residues 1 to 56 (MKRPRAPSGSDGESDGPIDVGQENDLSQMARPLTTPSPSQMQARKKRRGIIEKRRR). The tract at residues 42-111 (QARKKRRGII…GGTGFFDARA (70 aa)) is transcriptional repression and interaction with NCOR1 and SIN3A. Positions 43–98 (ARKKRRGIIEKRRRDRINSSLSELRRLVPTAFEKQGSSKLEKAEVLQMTVDHLKML) constitute a bHLH domain. Residues 116 to 153 (FRSIGFRECLTEVIRYLGVLEGPSSHADPVRIRLLSHL) form the Orange domain. 2 disordered regions span residues 223–260 (HRPA…PPPT) and 272–306 (PIPP…PTGR). Residues 292–305 (SGSISSPCPSGPTG) are compositionally biased toward low complexity.

It belongs to the HEY family. As to quaternary structure, interacts with HES1, HDAC1, NCOR1 and SIN3A. Self-associates. Interacts with GATA4, GATA6, HEY1 and HEY2. In terms of tissue distribution, expressed in heart and at lower levels in brain, lung, muscle, ovary and testis.

The protein resides in the nucleus. Its function is as follows. Transcriptional repressor which binds preferentially to the canonical E box sequence 5'-CACGTG-3'. Downstream effector of Notch signaling required for cardiovascular development. Specifically required for the Notch-induced endocardial epithelial to mesenchymal transition, which is itself criticial for cardiac valve and septum development. Represses transcription by the cardiac transcriptional activators GATA4 and GATA6. This chain is Hairy/enhancer-of-split related with YRPW motif-like protein (Heyl), found in Mus musculus (Mouse).